Reading from the N-terminus, the 595-residue chain is 73 kDa paraflagellar rod protein (595 aa).

The tract at residues 294-317 (DAEATKRHAANKEKSDRYIRENED) is disordered. Residues 317–337 (DRQEETWNKIQDLERQLQKLG) form a calmodulin-binding region.

In terms of assembly, heterodimer of a 69 kDa and a 73 kDa protein.

Its subcellular location is the cell projection. It is found in the cilium. The protein resides in the flagellum. The protein localises to the cytoplasm. It localises to the cytoskeleton. Its function is as follows. Major component of the paraflagellar rod (PFR). The PFR is a highly ordered lattices of fibrous proteins that are located inside the flagellum and assume a fixed orientation with respect to the microtubular axoneme. The chain is 73 kDa paraflagellar rod protein (PFRC) from Trypanosoma brucei brucei.